The following is an 876-amino-acid chain: Dynein regulatory complex subunit 7 (876 aa).

2 coiled-coil regions span residues 1–33 and 258–295; these read MEVL…ERVT and KFEQ…AKPD. The interval 1–40 is disordered; it reads MEVLREKVEEEEEAEREEAAERAERTEKLERVTKSAEVSR. Residues 17 to 40 show a composition bias toward basic and acidic residues; that stretch reads EEAAERAERTEKLERVTKSAEVSR. The segment at 385-412 is disordered; sequence SLTEEDEEGLDDDDDDVEDLGKEEEDKS. The segment covering 387 to 407 has biased composition (acidic residues); it reads TEEDEEGLDDDDDDVEDLGKE. Coiled coils occupy residues 679–710 and 784–809; these read QLKN…EEEE and QRLI…KKQQ.

The protein belongs to the DRC7 family. As to quaternary structure, component of the nexin-dynein regulatory complex (N-DRC). Interacts with TCTE1/DRC5. Interacts with DRC3 and GAS8/DRC4. As to expression, expressed in diplotene and pachytene spermytocytes, and in round and elongating spermatids (at protein level). Strongly expressed in spleen and testis, faintly expressed in kidney, ovary and thymus. In terms of tissue distribution, abundantly expressed in the testis and is weakly expressed in the brain, thymus, lung and ovary. Expressed in ciliated cells.

The protein resides in the cell projection. It is found in the cilium. Its subcellular location is the flagellum. It localises to the cytoplasm. The protein localises to the cytoskeleton. The protein resides in the cilium axoneme. It is found in the flagellum axoneme. Its function is as follows. Component of the nexin-dynein regulatory complex (N-DRC) a key regulator of ciliary/flagellar motility which maintains the alignment and integrity of the distal axoneme and regulates microtubule sliding in motile axonemes. Essential for male fertility, sperm head morphogenesis and sperm flagellum formation. Not required for ciliogenesis in the brain and trachea. The chain is Dynein regulatory complex subunit 7 (Drc7) from Mus musculus (Mouse).